Reading from the N-terminus, the 289-residue chain is S-methyl-5'-thioadenosine phosphorylase (289 aa).

Phosphate is bound by residues Ser24, 66–67, and 99–100; these read RH and TA. Met202 is a substrate binding site. Thr203 contacts phosphate. 226–228 contributes to the substrate binding site; it reads DYD.

Belongs to the PNP/MTAP phosphorylase family. MTAP subfamily. In terms of assembly, homotrimer.

It localises to the cytoplasm. It is found in the nucleus. The enzyme catalyses S-methyl-5'-thioadenosine + phosphate = 5-(methylsulfanyl)-alpha-D-ribose 1-phosphate + adenine. Its pathway is amino-acid biosynthesis; L-methionine biosynthesis via salvage pathway; S-methyl-5-thio-alpha-D-ribose 1-phosphate from S-methyl-5'-thioadenosine (phosphorylase route): step 1/1. In terms of biological role, catalyzes the reversible phosphorylation of S-methyl-5'-thioadenosine (MTA) to adenine and 5-methylthioribose-1-phosphate. Involved in the breakdown of MTA, a major by-product of polyamine biosynthesis. Responsible for the first step in the methionine salvage pathway after MTA has been generated from S-adenosylmethionine. Has broad substrate specificity with 6-aminopurine nucleosides as preferred substrates. In Drosophila pseudoobscura pseudoobscura (Fruit fly), this protein is S-methyl-5'-thioadenosine phosphorylase.